We begin with the raw amino-acid sequence, 202 residues long: Holliday junction resolvase RecU (202 aa).

Positions 85, 87, 100, and 119 each coordinate Mg(2+).

This sequence belongs to the RecU family. The cofactor is Mg(2+).

The protein resides in the cytoplasm. It catalyses the reaction Endonucleolytic cleavage at a junction such as a reciprocal single-stranded crossover between two homologous DNA duplexes (Holliday junction).. In terms of biological role, endonuclease that resolves Holliday junction intermediates in genetic recombination. Cleaves mobile four-strand junctions by introducing symmetrical nicks in paired strands. Promotes annealing of linear ssDNA with homologous dsDNA. Required for DNA repair, homologous recombination and chromosome segregation. This is Holliday junction resolvase RecU from Streptococcus equi subsp. equi (strain 4047).